The sequence spans 766 residues: Oligopeptide transporter 7 (766 aa).

The tract at residues 1-58 is disordered; that stretch reads MEESEQVLPLLTNPKDLTNPSYASSSSSSSEPRDETEDLLLPISDENEEEEEENSPIR. Over residues 45 to 54 the composition is skewed to acidic residues; the sequence is DENEEEEEEN. A run of 15 helical transmembrane segments spans residues 79–99, 104–124, 154–174, 184–204, 247–267, 287–307, 324–344, 390–410, 446–466, 477–497, 509–529, 561–581, 627–647, 676–696, and 709–729; these read MWVL…FFWY, LTIS…LMAA, ITIF…VTVV, FFVS…WAGI, FVIA…LFQI, IGSG…STIS, VGVG…WLDV, LCTF…ATIM, VPEW…IFAC, WWGV…IGII, IITE…NMCF, FMAQ…TAWW, LYKS…LVWL, ATAV…FVVF, and VLSG…YMCL.

Belongs to the oligopeptide OPT transporter (TC 2.A.67.1) family. As to expression, expressed in the major and the first-order veins and in the hydathodes of the leaves. In the roots, expressed in circular zones surrounding lateral root primordia and in some part of the root epidermis. Expressed also in the sepals and the cortical tissues of the stem, but not in the conducting bundles, the petals or the reproductive tissues.

The protein localises to the membrane. In terms of biological role, involved in the translocation of tetra- and pentapeptides across the cellular membrane in an energy-dependent manner. May also transport cadmium complexes. This Arabidopsis thaliana (Mouse-ear cress) protein is Oligopeptide transporter 7 (OPT7).